Here is a 473-residue protein sequence, read N- to C-terminus: O-methyltransferase aclU (473 aa).

Residues aspartate 320 and 354–356 each bind S-adenosyl-L-methionine; that span reads GDF. Histidine 373 (proton acceptor) is an active-site residue.

It belongs to the class I-like SAM-binding methyltransferase superfamily. Cation-independent O-methyltransferase family. COMT subfamily.

It participates in mycotoxin biosynthesis. In terms of biological role, O-methyltransferase; part of the gene cluster that mediates the biosynthesis of aspirochlorine (or antibiotic A30641), an unusual halogenated spiro compound with distinctive antifungal properties due to selective inhibition of protein biosynthesis, and which is also active against bacteria, viruses, and murine tumor cells. The non-ribosomal peptide synthetase (NRPS) aclP is responsible the formation of the diketopiperazine (DKP) core from the condensation of 2 phenylalanine residues. One Phe residue is tailored into chlorotyrosine by hydroxylation and chlorination, whereas the second Phe undergoes an unprecedented C-C bond cleavage to be converted into glycine. After formation of the DKP, sulfur is incorporated into the DKP by conjugation with glutathione by aclG, followed by its stepwise degradation to the thiol by aclI, aclJ and aclK, and the dithiol oxidation by aclT. In addition, oxygenases (aclB, aclC, aclL and aclO) and O-methyltransferases (aclM and aclU) act as tailoring enzymes to produce the intermediate dechloroaspirochlorine. Ultimately, chlorination of dechloroaspirochlorine by the halogenase aclH is the last step in the aspirochlorine pathway. This Aspergillus oryzae (strain ATCC 42149 / RIB 40) (Yellow koji mold) protein is O-methyltransferase aclU.